Reading from the N-terminus, the 215-residue chain is LexA repressor (215 aa).

A DNA-binding region (H-T-H motif) is located at residues 29 to 49; sequence VREICSAVGFKSTSTVHSYLQ. Active-site for autocatalytic cleavage activity residues include Ser138 and Lys175.

The protein belongs to the peptidase S24 family. In terms of assembly, homodimer.

It carries out the reaction Hydrolysis of Ala-|-Gly bond in repressor LexA.. Represses a number of genes involved in the response to DNA damage (SOS response), including recA and lexA. In the presence of single-stranded DNA, RecA interacts with LexA causing an autocatalytic cleavage which disrupts the DNA-binding part of LexA, leading to derepression of the SOS regulon and eventually DNA repair. The chain is LexA repressor from Ruminiclostridium cellulolyticum (strain ATCC 35319 / DSM 5812 / JCM 6584 / H10) (Clostridium cellulolyticum).